Reading from the N-terminus, the 817-residue chain is Lon protease (817 aa).

The Lon N-terminal domain occupies 44 to 239; it reads LPILPLRNTV…ETLRYMNVEL (196 aa). 390–397 contributes to the ATP binding site; sequence GPPGVGKT. Residues 626-807 enclose the Lon proteolytic domain; the sequence is NDVAGVVTGL…SEVLAIALTD (182 aa). Residues serine 713 and lysine 756 contribute to the active site.

This sequence belongs to the peptidase S16 family. In terms of assembly, homohexamer. Organized in a ring with a central cavity.

The protein resides in the cytoplasm. It catalyses the reaction Hydrolysis of proteins in presence of ATP.. Functionally, ATP-dependent serine protease that mediates the selective degradation of mutant and abnormal proteins as well as certain short-lived regulatory proteins. Required for cellular homeostasis and for survival from DNA damage and developmental changes induced by stress. Degrades polypeptides processively to yield small peptide fragments that are 5 to 10 amino acids long. Binds to DNA in a double-stranded, site-specific manner. The polypeptide is Lon protease (Flavobacterium johnsoniae (strain ATCC 17061 / DSM 2064 / JCM 8514 / BCRC 14874 / CCUG 350202 / NBRC 14942 / NCIMB 11054 / UW101) (Cytophaga johnsonae)).